A 124-amino-acid chain; its full sequence is Urocortin (124 aa).

Positions 1–25 (MRQAGRAALLAALLLLVQLCPGSSQ) are cleaved as a signal peptide. The interval 23–46 (SSQRSPEAAGVQDPSLRWSPGARN) is disordered. Positions 26–82 (RSPEAAGVQDPSLRWSPGARNQGGGARALLLLLAERFPRRAGPGRLGLGTAGERPRR) are excised as a propeptide. Valine amide is present on Val-122.

This sequence belongs to the sauvagine/corticotropin-releasing factor/urotensin I family. Interacts with CRHR1 and CRHR2 (via their N-terminal extracellular domain). In terms of tissue distribution, keratinocytes in epidermis and the outer and inner root sheaths of hair follicles, epithelium of sebaceous and sweat glands, erector pili muscle, cutaneous blood vessel walls, cutaneous nerves and dermal mononuclear cells. Detected in plasma cells in the lamia propria in colon mucosa (at protein level). Expressed in pituitary and adrenal glands. Detected in plasma cells in the lamia propria in colon mucosa.

Its subcellular location is the secreted. In terms of biological role, acts in vitro to stimulate the secretion of adrenocorticotropic hormone (ACTH). Binds with high affinity to CRF receptor types 1, 2-alpha, and 2-beta. Plays a role in the establishment of normal hearing thresholds. Reduces food intake and regulates ghrelin levels in gastric body and plasma. The protein is Urocortin (UCN) of Homo sapiens (Human).